The following is a 590-amino-acid chain: Nuclear receptor subfamily 2 group C member 1 (590 aa).

The segment at 1–166 is required for interaction with KAT2B; the sequence is MATIEEIAHQ…RLQRCIAFGM (166 aa). A DNA-binding region (nuclear receptor) is located at residues 98–173; sequence FDLCVVCGDK…FGMKQDSVQC (76 aa). NR C4-type zinc fingers lie at residues 101–121 and 137–156; these read CVVC…CEGC and CRGS…CQYC. Phosphoserine is present on residues serine 185 and serine 203. Threonine 208 carries the post-translational modification Phosphothreonine. The residue at position 210 (threonine 210) is a Phosphothreonine; by MAPK1. Lysine 238 participates in a covalent cross-link: Glycyl lysine isopeptide (Lys-Gly) (interchain with G-Cter in SUMO); alternate. Lysine 238 is covalently cross-linked (Glycyl lysine isopeptide (Lys-Gly) (interchain with G-Cter in SUMO2); alternate). Positions 333 to 577 constitute an NR LBD domain; it reads ESMEGSTHLI…SVIPHILKME (245 aa). Position 568 is a phosphoserine; by PKC (serine 568). The required for interaction with NRIP1 stretch occupies residues 571–590; it reads PHILKMEPADYNSQIIGHSL. Lysine 575 participates in a covalent cross-link: Glycyl lysine isopeptide (Lys-Gly) (interchain with G-Cter in SUMO2).

This sequence belongs to the nuclear hormone receptor family. NR2 subfamily. In terms of assembly, homodimer. Heterodimer; with NR2C2 which is required for chromatin remodeling and for binding to promoter regions such as globin DR1 repeats. Interacts with ESR1; the interaction prevents homodimerization of ESR1 and suppresses its transcriptional activity and cell growth. Interacts with NRIP1 (via its LXXLL motifs); the interaction provides corepressor activity. Interacts with HDAC3 (via the DNA-binding domain); the interaction recruits phosphorylated NR2C1 to PML bodies for sumoylation. Interacts with HDAC4 (via the DNA-binding domain). Interacts with PIAS1; the interaction is required for sumoylation of NR2C1. Interacts with UBE2I; the interaction is required for sumoylation of NR2C1. Interacts with KAT2B; the interaction acts as a corepressor of gene expression. Sumoylation requires both PIAS1 and UBE2I. Sumoylation appears to dissociate NR2C1 from the PML nuclear bodies. Enhances the interaction with NRIP1 but inhibits interaction with KAT2B. In proliferating cells, stimulation by all-trans retinoic acid, activation of MAPK1-mediated phosphorylation and recruitment to PML bodies with subsequent sumoylation, suppresses OCT4 expression. In terms of processing, phosphorylated on several serine and threonine residues. Phosphorylation on Thr-210, stimulated by all-trans retinoic acid (atRA) mediates PML location and sumoylation in proliferating cells which then modulates its association with effector molecules, KAT2B and NRIP1. Phosphorylation on Ser-568 by PKC is important for protein stability and function as activator of RARB.

It localises to the nucleus. The protein localises to the PML body. Functionally, orphan nuclear receptor. Binds the IR7 element in the promoter of its own gene in an autoregulatory negative feedback mechanism. Primarily repressor of a broad range of genes including ESR1 and RARB. Together with NR2C2, forms the core of the DRED (direct repeat erythroid-definitive) complex that represses embryonic and fetal globin transcription. Binds to hormone response elements (HREs) consisting of two 5'-AGGTCA-3' half site direct repeat consensus sequences. Also activator of OCT4 gene expression. Plays a fundamental role in early embryogenesis and regulates embryonic stem cell proliferation and differentiation. Mediator of retinoic acid-regulated preadipocyte proliferation. The chain is Nuclear receptor subfamily 2 group C member 1 (Nr2c1) from Rattus norvegicus (Rat).